We begin with the raw amino-acid sequence, 149 residues long: Large ribosomal subunit protein bL9 (149 aa).

It belongs to the bacterial ribosomal protein bL9 family.

In terms of biological role, binds to the 23S rRNA. This Haemophilus influenzae (strain PittGG) protein is Large ribosomal subunit protein bL9.